We begin with the raw amino-acid sequence, 410 residues long: Polyprenol-phosphate-mannose-dependent alpha-(1-2)-phosphatidylinositol pentamannoside mannosyltransferase (410 aa).

10 helical membrane-spanning segments follow: residues leucine 31 to proline 51, phenylalanine 96 to tryptophan 116, threonine 160 to threonine 180, leucine 188 to leucine 208, alanine 214 to valine 234, glycine 276 to tryptophan 296, leucine 306 to histidine 326, tryptophan 328 to glycine 348, isoleucine 351 to alanine 371, and leucine 384 to phenylalanine 404.

The protein belongs to the glycosyltransferase 87 family.

It is found in the cell membrane. It participates in phospholipid metabolism; phosphatidylinositol metabolism. Its function is as follows. Catalyzes the alpha-1,2 addition of a mannose residue from polyprenol-phosphate-mannose (PPM) to a monoacyl phosphatidylinositol tetramannoside (AcPIM4) to generate a monoacyl phosphatidylinositol pentamannoside (AcPIM5). This chain is Polyprenol-phosphate-mannose-dependent alpha-(1-2)-phosphatidylinositol pentamannoside mannosyltransferase, found in Mycolicibacterium smegmatis (strain ATCC 700084 / mc(2)155) (Mycobacterium smegmatis).